The primary structure comprises 879 residues: Aminopeptidase M1 (879 aa).

Residues 98–205 (HGVGVLKLGF…MSTYLVAIVV (108 aa)) form a required for membrane association region. Substrate is bound by residues Glu-138 and 271-275 (GAMEN). His-307 lines the Zn(2+) pocket. Glu-308 functions as the Proton acceptor in the catalytic mechanism. Residues His-311 and Glu-330 each contribute to the Zn(2+) site. A Dileucine internalization motif motif is present at residues 728-729 (LL).

This sequence belongs to the peptidase M1 family. As to quaternary structure, homodimer. Interacts with N-1-naphthylphthalamic acid (NPA). Zn(2+) serves as cofactor. Ubiquitous with preferential expression in 5 days-old seedlings, roots, young flowers, upper inflorescence stems, and rosette leaves.

Its subcellular location is the membrane. It localises to the microsome membrane. It is found in the cytoplasm. The catalysed reaction is Release of an N-terminal amino acid, Xaa-|-Yaa- from a peptide, amide or arylamide. Xaa is preferably Ala, but may be most amino acids including Pro (slow action). When a terminal hydrophobic residue is followed by a prolyl residue, the two may be released as an intact Xaa-Pro dipeptide.. Functionally, metallopeptidase that binds to the auxin transport inhibitor N-1-naphthylphthalamic acid (NPA). Required for embryonic and seedling development as well as cell cycle progression. Homodimerization is required to proper localization and activity. May play a negative role in the regulation of PIN auxin transport proteins. This Arabidopsis thaliana (Mouse-ear cress) protein is Aminopeptidase M1 (APM1).